The sequence spans 818 residues: Piwi-like protein (818 aa).

The PAZ domain maps to Arg220–Gly339. The 300-residue stretch at Lys501–Lys800 folds into the Piwi domain.

This sequence belongs to the argonaute family. Piwi subfamily.

The sequence is that of Piwi-like protein (iwi) from Dugesia japonica (Planarian).